Here is a 228-residue protein sequence, read N- to C-terminus: Cytochrome c biogenesis ATP-binding export protein CcmA (228 aa).

The ABC transporter domain occupies 2 to 227 (LSIERLGVGR…LHLERSGAWL (226 aa)). 34–41 (GANGSGKT) is a binding site for ATP. Residues 106-126 (GAPDGTSSVPASGRSGVAAPP) form a disordered region.

This sequence belongs to the ABC transporter superfamily. CcmA exporter (TC 3.A.1.107) family. As to quaternary structure, the complex is composed of two ATP-binding proteins (CcmA) and two transmembrane proteins (CcmB).

The protein resides in the cell inner membrane. The catalysed reaction is heme b(in) + ATP + H2O = heme b(out) + ADP + phosphate + H(+). In terms of biological role, part of the ABC transporter complex CcmAB involved in the biogenesis of c-type cytochromes; once thought to export heme, this seems not to be the case, but its exact role is uncertain. Responsible for energy coupling to the transport system. The polypeptide is Cytochrome c biogenesis ATP-binding export protein CcmA (Paraburkholderia xenovorans (strain LB400)).